The following is a 163-amino-acid chain: Nucleotide-binding protein LA_3406 (163 aa).

Belongs to the YajQ family.

In terms of biological role, nucleotide-binding protein. In Leptospira interrogans serogroup Icterohaemorrhagiae serovar Lai (strain 56601), this protein is Nucleotide-binding protein LA_3406.